The sequence spans 472 residues: Probable glycine dehydrogenase (decarboxylating) subunit 2 (472 aa).

Lys-268 is modified (N6-(pyridoxal phosphate)lysine).

This sequence belongs to the GcvP family. C-terminal subunit subfamily. The glycine cleavage system is composed of four proteins: P, T, L and H. In this organism, the P 'protein' is a heterodimer of two subunits. Pyridoxal 5'-phosphate is required as a cofactor.

It catalyses the reaction N(6)-[(R)-lipoyl]-L-lysyl-[glycine-cleavage complex H protein] + glycine + H(+) = N(6)-[(R)-S(8)-aminomethyldihydrolipoyl]-L-lysyl-[glycine-cleavage complex H protein] + CO2. The glycine cleavage system catalyzes the degradation of glycine. The P protein binds the alpha-amino group of glycine through its pyridoxal phosphate cofactor; CO(2) is released and the remaining methylamine moiety is then transferred to the lipoamide cofactor of the H protein. In Thermoplasma volcanium (strain ATCC 51530 / DSM 4299 / JCM 9571 / NBRC 15438 / GSS1), this protein is Probable glycine dehydrogenase (decarboxylating) subunit 2.